The following is a 307-amino-acid chain: MKLQIKPPNTFDEFVGKQEIISQIQLSIKASKLNKTQLDHILLYGPPGVGKTTLARLIANELKTKLQIIQGGHLQKPSDFLNAISLIKKGDVLFIDEIHAVAPNVMELMYPVMDVFKIQVLIGKDFNSKIVEMKVNPFTLIGATTQLGKIINPLEDRFGVILNINYYSNAEIEKMVSIYGKQMKLELNSNEISAITEHSKQTPRIAIRIVRRIFEQKIVNKKIDLEGLFKNLMIYKNGLQSIDVQYLEVLNRQNEPQGIKSISSMLGIDRHTIENKIEPFLLRENMIQKTKKGRIITNSGREYLVNF.

Residues 1–167 (MKLQIKPPNT…FGVILNINYY (167 aa)) form a large ATPase domain (RuvB-L) region. ATP contacts are provided by Ile-5, Gly-48, Lys-51, Thr-52, Thr-53, Arg-157, Tyr-167, and Arg-204. Thr-52 lines the Mg(2+) pocket. The segment at 168–233 (SNAEIEKMVS…DLEGLFKNLM (66 aa)) is small ATPAse domain (RuvB-S). Positions 236 to 307 (KNGLQSIDVQ…NSGREYLVNF (72 aa)) are head domain (RuvB-H). 3 residues coordinate DNA: Arg-270, Lys-289, and Arg-294.

The protein belongs to the RuvB family. As to quaternary structure, homohexamer. Forms an RuvA(8)-RuvB(12)-Holliday junction (HJ) complex. HJ DNA is sandwiched between 2 RuvA tetramers; dsDNA enters through RuvA and exits via RuvB. An RuvB hexamer assembles on each DNA strand where it exits the tetramer. Each RuvB hexamer is contacted by two RuvA subunits (via domain III) on 2 adjacent RuvB subunits; this complex drives branch migration. In the full resolvosome a probable DNA-RuvA(4)-RuvB(12)-RuvC(2) complex forms which resolves the HJ.

The protein localises to the cytoplasm. It carries out the reaction ATP + H2O = ADP + phosphate + H(+). The RuvA-RuvB-RuvC complex processes Holliday junction (HJ) DNA during genetic recombination and DNA repair, while the RuvA-RuvB complex plays an important role in the rescue of blocked DNA replication forks via replication fork reversal (RFR). RuvA specifically binds to HJ cruciform DNA, conferring on it an open structure. The RuvB hexamer acts as an ATP-dependent pump, pulling dsDNA into and through the RuvAB complex. RuvB forms 2 homohexamers on either side of HJ DNA bound by 1 or 2 RuvA tetramers; 4 subunits per hexamer contact DNA at a time. Coordinated motions by a converter formed by DNA-disengaged RuvB subunits stimulates ATP hydrolysis and nucleotide exchange. Immobilization of the converter enables RuvB to convert the ATP-contained energy into a lever motion, pulling 2 nucleotides of DNA out of the RuvA tetramer per ATP hydrolyzed, thus driving DNA branch migration. The RuvB motors rotate together with the DNA substrate, which together with the progressing nucleotide cycle form the mechanistic basis for DNA recombination by continuous HJ branch migration. Branch migration allows RuvC to scan DNA until it finds its consensus sequence, where it cleaves and resolves cruciform DNA. In Mycoplasma genitalium (strain ATCC 33530 / DSM 19775 / NCTC 10195 / G37) (Mycoplasmoides genitalium), this protein is Holliday junction branch migration complex subunit RuvB.